Here is a 138-residue protein sequence, read N- to C-terminus: Large ribosomal subunit protein uL14 (138 aa).

Belongs to the universal ribosomal protein uL14 family. In terms of assembly, part of the 50S ribosomal subunit. Forms a cluster with proteins L3 and L24e, part of which may contact the 16S rRNA in 2 intersubunit bridges.

Functionally, binds to 23S rRNA. Forms part of two intersubunit bridges in the 70S ribosome. The protein is Large ribosomal subunit protein uL14 of Hyperthermus butylicus (strain DSM 5456 / JCM 9403 / PLM1-5).